A 596-amino-acid polypeptide reads, in one-letter code: MTKERMTIDYENDGDFEYDKNKYKTITTRIKSIEPSEGWLEPSGSVGHINTIPEAGDVHVDEHEDRGSSIDDDSRTYLLYFTETRRKLENRHVQLIAISGVIGTALFVAIGKALYRGGPASLLLAFALWCVPILCITVSTAEMVCFFPVSSPFLRLATKCVDDSLAVMASWNFWFLECVQIPFEIVSVNTIIHYWRDDYSAGIPLAVQVVLYLLISICAVKYYGEMEFWLASFKIILALGLFTFTFITMLGGNPEHDRYGFRNYGESPFKKYFPDGNDVGKSSGYFQGFLACLIQASFTIAGGEYISMLAGEVKRPRKVLPKAFKQVFVRLTFLFLGSCLCVGIVCSPNDPDLTAAINEARPGAGSSPYVIAMNNLKIRILPDIVNIALITAAFSAGNAYTYCSSRTFYGMALDGYAPKIFTRCNRHGVPIYSVAISLVWALVSLLQLNSNSAVVLNWLINLITASQLINFVVLCIVYLFFRRAYHVQQDSLPKLPFRSWGQPYTAIIGLVSCSAMILIQGYTVFFPKLWNTQDFLFSYLMVFINIGIYVGYKFIWKRGKDHFKNPHEIDFSKELTEIENHEIESSFEKFQYYSKA.

The Cytoplasmic segment spans residues 1-94 (MTKERMTIDY…RRKLENRHVQ (94 aa)). The helical transmembrane segment at 95–115 (LIAISGVIGTALFVAIGKALY) threads the bilayer. Residues 116–117 (RG) lie on the Extracellular side of the membrane. A helical membrane pass occupies residues 118–138 (GPASLLLAFALWCVPILCITV). Over 139–165 (STAEMVCFFPVSSPFLRLATKCVDDSL) the chain is Cytoplasmic. The chain crosses the membrane as a helical span at residues 166 to 186 (AVMASWNFWFLECVQIPFEIV). The Extracellular segment spans residues 187-199 (SVNTIIHYWRDDY). The chain crosses the membrane as a helical span at residues 200-220 (SAGIPLAVQVVLYLLISICAV). Residues 221–227 (KYYGEME) are Cytoplasmic-facing. Residues 228–248 (FWLASFKIILALGLFTFTFIT) traverse the membrane as a helical segment. Residues 249 to 288 (MLGGNPEHDRYGFRNYGESPFKKYFPDGNDVGKSSGYFQG) are Extracellular-facing. The chain crosses the membrane as a helical span at residues 289 to 309 (FLACLIQASFTIAGGEYISML). Over 310–326 (AGEVKRPRKVLPKAFKQ) the chain is Cytoplasmic. The helical transmembrane segment at 327 to 347 (VFVRLTFLFLGSCLCVGIVCS) threads the bilayer. Topologically, residues 348–379 (PNDPDLTAAINEARPGAGSSPYVIAMNNLKIR) are extracellular. Residues 380–400 (ILPDIVNIALITAAFSAGNAY) traverse the membrane as a helical segment. Over 401–427 (TYCSSRTFYGMALDGYAPKIFTRCNRH) the chain is Cytoplasmic. Residues 428–448 (GVPIYSVAISLVWALVSLLQL) form a helical membrane-spanning segment. At 449–459 (NSNSAVVLNWL) the chain is on the extracellular side. Residues 460–480 (INLITASQLINFVVLCIVYLF) form a helical membrane-spanning segment. Over 481-505 (FRRAYHVQQDSLPKLPFRSWGQPYT) the chain is Cytoplasmic. The helical transmembrane segment at 506 to 526 (AIIGLVSCSAMILIQGYTVFF) threads the bilayer. The Extracellular segment spans residues 527-534 (PKLWNTQD). A helical membrane pass occupies residues 535-555 (FLFSYLMVFINIGIYVGYKFI). The Cytoplasmic segment spans residues 556 to 596 (WKRGKDHFKNPHEIDFSKELTEIENHEIESSFEKFQYYSKA).

This sequence belongs to the amino acid-polyamine-organocation (APC) superfamily. YAT (TC 2.A.3.10) family.

The protein localises to the membrane. In terms of biological role, general amino acid permease with broad substrate specificity. Can also transport carnitine. This is General amino acid permease AGP2 (AGP2) from Saccharomyces cerevisiae (strain ATCC 204508 / S288c) (Baker's yeast).